Reading from the N-terminus, the 47-residue chain is Defensin NsD7 (47 aa).

4 disulfides stabilise this stretch: cysteine 3–cysteine 47, cysteine 14–cysteine 34, cysteine 20–cysteine 41, and cysteine 24–cysteine 43. Residues lysine 4, histidine 33, lysine 36, and arginine 39 each coordinate a 1,2-diacyl-sn-glycero-3-phosphate.

This sequence belongs to the DEFL family. In the presence of phosphatidic acid (PA), forms right-handed double helices which tend to bundle into fibrils. Each helix is a repetition of dimers containing 2 bound molecules of PA per dimer. Dimers are arranged orthogonally in a tip-to-tip configuration with 1 molecule of PA located at the dimer contact interface. Association of 2 helices to form a double helix depends on intercalating isoleucine residues Ile-15 and Ile-37. Bundling of double helices into fibrils depends on Arg-26.

The protein resides in the vacuole. Its function is as follows. Plant defense peptide. Disrupts membranes containing phosphatidic acid (PA) via a PA-dependent oligomerization process. The protein is Defensin NsD7 of Nicotiana suaveolens (Australian tobacco).